The chain runs to 155 residues: Interleukin-2 (155 aa).

The first 20 residues, 1–20 (MYKIQLLSCIALTLALVANG), serve as a signal peptide directing secretion. Thr23 is a glycosylation site (O-linked (GalNAc...) threonine). A disulfide bridge connects residues Cys79 and Cys127.

This sequence belongs to the IL-2 family.

The protein resides in the secreted. Its function is as follows. Cytokine produced by activated CD4-positive helper T-cells and to a lesser extend activated CD8-positive T-cells and natural killer (NK) cells that plays pivotal roles in the immune response and tolerance. Binds to a receptor complex composed of either the high-affinity trimeric IL-2R (IL2RA/CD25, IL2RB/CD122 and IL2RG/CD132) or the low-affinity dimeric IL-2R (IL2RB and IL2RG). Interaction with the receptor leads to oligomerization and conformation changes in the IL-2R subunits resulting in downstream signaling starting with phosphorylation of JAK1 and JAK3. In turn, JAK1 and JAK3 phosphorylate the receptor to form a docking site leading to the phosphorylation of several substrates including STAT5. This process leads to activation of several pathways including STAT, phosphoinositide-3-kinase/PI3K and mitogen-activated protein kinase/MAPK pathways. Functions as a T-cell growth factor and can increase NK-cell cytolytic activity as well. Promotes strong proliferation of activated B-cells and subsequently immunoglobulin production. Plays a pivotal role in regulating the adaptive immune system by controlling the survival and proliferation of regulatory T-cells, which are required for the maintenance of immune tolerance. Moreover, participates in the differentiation and homeostasis of effector T-cell subsets, including Th1, Th2, Th17 as well as memory CD8-positive T-cells. The protein is Interleukin-2 (IL2) of Bubalus bubalis (Domestic water buffalo).